Here is a 384-residue protein sequence, read N- to C-terminus: MSRYLFTSESVSEGHPDKIADQISDAVLDEILKQDPKARVACETYVKTGMALVGGEITTSAWVDIENLTRQVICDIGYKHSDMGFDGHSCAVLNAIGKQSSDINQGVDRENPLDQGAGDQGIMFGYATNETEVLMPAAITYAHRLMERQAKVRKEGTLPWLRPDAKSQVTLKYEDHKIVGVDAVVLSTQHCDSISQHDLHEAVMEEIIKPVLPAEWLSKETKYFINPTGRFVIGGPMGDCGLTGRKIIVDTYGGAARHGGGAFSGKDPSKVDRSAAYAARYVAKNIVAAGLADRCEIQLSYAIGVADPTSIMVETFGTGKVANELLVALVREFFDLRPYGLIKMLDLIQPIYRETAAYGHFGREQFPWEKVDRAEELRAAAGLK.

His-15 provides a ligand contact to ATP. Residue Asp-17 coordinates Mg(2+). Glu-43 is a binding site for K(+). Residues Glu-56 and Gln-99 each contribute to the L-methionine site. Residues 99–109 (QSSDINQGVDR) form a flexible loop region. ATP contacts are provided by residues 164–166 (DAK), 230–231 (RF), Asp-239, 245–246 (RK), Ala-262, and Lys-266. Position 239 (Asp-239) interacts with L-methionine. Lys-270 serves as a coordination point for L-methionine.

The protein belongs to the AdoMet synthase family. Homotetramer; dimer of dimers. Requires Mg(2+) as cofactor. It depends on K(+) as a cofactor.

Its subcellular location is the cytoplasm. It carries out the reaction L-methionine + ATP + H2O = S-adenosyl-L-methionine + phosphate + diphosphate. The protein operates within amino-acid biosynthesis; S-adenosyl-L-methionine biosynthesis; S-adenosyl-L-methionine from L-methionine: step 1/1. Functionally, catalyzes the formation of S-adenosylmethionine (AdoMet) from methionine and ATP. The overall synthetic reaction is composed of two sequential steps, AdoMet formation and the subsequent tripolyphosphate hydrolysis which occurs prior to release of AdoMet from the enzyme. The polypeptide is S-adenosylmethionine synthase (Pasteurella multocida (strain Pm70)).